The following is a 2062-amino-acid chain: MDSFFPEGARVWLRENGQHFPSTVNSCAEGVVVFQTDYGQVFTYKQSTITNQKVTAMHPLHEEGVDDMASLAELHGGSIMYNLFQRYKRNQIYTYIGSIIASVNPYQPIAGLYERATMEEYSRCHLGELPPHIFAIANECYRCLWKRHDNQCVLISGESGAGKTESTKLILKFLSVISQQTLDLGLQEKTSSVEQAILQSSPIMEAFGNAKTVYNNNSSRFGKFVQLNICQQGNIQGGRIVDYLLEKNRVVRQNPGERNYHIFYALLAGLDQGEREEFYLSLPENYHYLNQSGCTEDKTISDQESFRQVITAMEVMQFSKEEVREVLRLLAGILHLGNIEFITAGGAQIPFKTALGRSADLLGLDPTQLTDALTQRSMILRGEEILTPLSVQQAVDSRDSLAMALYARCFEWVIKKINSRIKGKDDFKSIGILDIFGFENFEVNHFEQFNINYANEKLQEYFNKHIFSLEQLEYSREGLVWEDIDWIDNGECLDLIEKKLGLLALINEESHFPQATDSTLLEKLHSQHANNHFYVKPRVAVNNFGVKHYAGEVQYDVRGILEKNRDTFRDDLLNLLRESRFDFIYDLFEHVSSRNNQDTLKCGSKHRRPTVSSQFKDSLHSLMATLSSSNPFFVRCIKPNTQKMPDQFDQVVVLNQLRYSGMLETVRIRKAGYAVRRPFQDFYKRYKVLMRNLALPDDIRGKCTVLLQVYDASNSEWQLGKTKVFLRESLEQKLEKRREEEIDRAAMVIRAHILGYLARKQYRKVLCGVVTIQKNYRAFLARKKFLHLKKAAIVFQKQLRGQLARRVYRQLLAEKRELEEKKRREEEKKREEEERERERAQREADLLRAHQEAETRRQQELEALQKSQREADLTRELEKQRENKQVEEILRLEKEIEDLQRMKERQELSLTEASLQKLQQLRDEELRRLEDEACRAAQEFLESLNFDEIDECVRNIERSLSVGSEISGEELSELAESASGEKPNFNFSQPYPAEEEVDEGFEADDDAFKDSPNPSEHGHSDQRTSGIRTSDDSSEEDPYMNYTVVPTSPSADSTVLLAASMQDSASLHNSSSGESTYCMPQNNGDLPSPDGDYDYDQDDYEDGAITSGSSVTFSNSYGSQWSPDYRYSVGTYNSSGAYRFSSEGAQSSFEDSEEDFDSRFDTDDELSYRRDSVYSCVTLPYFHSFLYMKGGLMNSWKRRWCVLKDETFLWFRSKQEALKQGWLHKKGGGSSTLSRRNWKKRWFVLRQSKLMYFENDSEEKLKGTVEVRTAKEIIDNTSKENGIDIILADRTFHLIAESPEDASQWFSVLSQVHSSTDQEIREMHDEQANPQNAVGTLDVGLIDSVCASDSPDRPNSFVIITANRVLHCNADTPEEMHHWITLLQRSKGDTRVEGQEFIVRGWLHKEVKNSPKMSSLKLKKRWFVLTHNSLDYYKSSEKNALKLGTLVLNSLCSVVPPDEKIFKETGYWNVTVYGRKHCYRLYTKLLNEATRWSSAIQNVTDTKAPIDTPTQQLIQDIKENCLNSDVVEQIYKRNPILRYTHHPLHSPLLPLPYGDINLNLLKDKGYTTLQDEAIKIFNSLQQLESMSDPIPIIQGILQTGHDLRPLRDELYCQLIKQTNKVPHPGSVGNLYSWQILTCLSCTFLPSRGILKYLKFHLKRIREQFPGTEMEKYALFIYESLKKTKCREFVPSRDEIEALIHRQEMTSTVYCHGGGSCKITINSHTTAGEVVEKLIRGLAMEDSRNMFALFEYNGQVDKAIESRTIVADVLAKFEKLAATSEAGDAPWKFYFKLYCFLDTDSMPKDSVEFAFMFEQAHEAVIHGHHPAPEESLQVLAALRLQYLQGDYTPHTSIPPLEEVYSVQRLRARISQSTKTFTPYERLEKRRTSFLEGTLRRSFRTGSVVRQKAEEEQMLDMWIKEEVCSARTSIIDKWKKLQGMNQEQAMAKYMALIKEWPGYGSTLFDVECKEGGFPQELWLGVSADAVSVYKRGEGKPLEVFQYEHILSFGAPLANTYKIVVDERELLFETSEVVDVAKLMKAYISMIVKKRYSTTRSVSSQGSSR.

N-acetylmethionine is present on Met-1. The region spanning 63 to 739 is the Myosin motor domain; that stretch reads EGVDDMASLA…LEQKLEKRRE (677 aa). Residues Asn-104, Tyr-113, 160 to 165, and Asn-215 contribute to the ATP site; that span reads GAGKTE. An actin-binding region spans residues 619 to 641; that stretch reads LHSLMATLSSSNPFFVRCIKPNT. IQ domains follow at residues 742-771, 765-794, and 788-817; these read IDRAAMVIRAHILGYLARKQYRKVLCGVVT, VLCGVVTIQKNYRAFLARKKFLHLKKAAIV, and LKKAAIVFQKQLRGQLARRVYRQLLAEKRE. The segment at 814-882 is SAH; sequence EKRELEEKKR…LTRELEKQRE (69 aa). The tract at residues 822 to 844 is disordered; that stretch reads KRREEEKKREEEERERERAQREA. The stretch at 883 to 933 forms a coiled coil; the sequence is NKQVEEILRLEKEIEDLQRMKERQELSLTEASLQKLQQLRDEELRRLEDEA. 3 positions are modified to phosphoserine: Ser-961, Ser-964, and Ser-967. 2 disordered regions span residues 963–1047 and 1062–1089; these read GSEI…VVPT and QDSASLHNSSSGESTYCMPQNNGDLPSP. The segment covering 993-1007 has biased composition (acidic residues); sequence AEEEVDEGFEADDDA. Over residues 1062–1085 the composition is skewed to polar residues; sequence QDSASLHNSSSGESTYCMPQNNGD. Position 1162 is a phosphothreonine (Thr-1162). 2 PH domains span residues 1216 to 1314 and 1396 to 1501; these read EALK…QVHS and EFIV…NVTD. Positions 1551–1699 constitute a MyTH4 domain; that stretch reads LPYGDINLNL…PSRDEIEALI (149 aa). One can recognise an FERM domain in the interval 1704-2048; it reads MTSTVYCHGG…AYISMIVKKR (345 aa).

This sequence belongs to the TRAFAC class myosin-kinesin ATPase superfamily. Myosin family. In terms of assembly, monomer, when in an inactive conformation in the cytosol. Homodimer in its active, membrane-bound conformation; antiparallel coiled coil-mediated dimer formation. Interacts with ECPAS. Interacts with DCC and ITGB5; the presence of DCC inhibits ITGB5 binding. Interacts with tubulin; ITGB5 or DCC binding inhibits tubulin binding. Interacts strongly with CALM3 and weakly with CALM, the CALM3 interaction is essential for function in filopodial extension and motility. Interacts with ITGB1, ITGB3 and ITGB5. Interacts with NEO1. Interacts with VASP. The initiator methionine for isoform Headless is removed. As to expression, detected in brain, heart, kidney, liver, stomach, skeletal muscle, lung, testis and skin. Isoform Headless is expressed in embryonic and neuronal stem cells, and enriched in proliferating and migrating cells.

Its subcellular location is the cytoplasm. The protein localises to the cytosol. It localises to the cell projection. The protein resides in the lamellipodium. It is found in the ruffle. Its subcellular location is the cytoskeleton. The protein localises to the filopodium tip. It localises to the cell cortex. The protein resides in the filopodium membrane. In terms of biological role, myosins are actin-based motor molecules with ATPase activity. Unconventional myosins serve in intracellular movements. MYO10 binds to actin filaments and actin bundles and functions as a plus end-directed motor. Moves with higher velocity and takes larger steps on actin bundles than on single actin filaments. The tail domain binds to membranous compartments containing phosphatidylinositol 3,4,5-trisphosphate or integrins, and mediates cargo transport along actin filaments. Regulates cell shape, cell spreading and cell adhesion. Stimulates the formation and elongation of filopodia. In hippocampal neurons it induces the formation of dendritic filopodia by trafficking the actin-remodeling protein VASP to the tips of filopodia, where it promotes actin elongation. Plays a role in formation of the podosome belt in osteoclasts. Functions as a dominant-negative regulator of isoform 1, suppressing its filopodia-inducing and axon outgrowth-promoting activities. In hippocampal neurons, it increases VASP retention in spine heads to induce spine formation and spine head expansion. The sequence is that of Unconventional myosin-X (Myo10) from Mus musculus (Mouse).